We begin with the raw amino-acid sequence, 437 residues long: ATP-dependent RNA helicase RhlB (437 aa).

Positions glutamine 9 to alanine 37 match the Q motif motif. The Helicase ATP-binding domain occupies leucine 40–valine 219. Alanine 53 to threonine 60 contributes to the ATP binding site. A DEAD box motif is present at residues aspartate 165–aspartate 168. Residues alanine 245–isoleucine 390 enclose the Helicase C-terminal domain. Positions isoleucine 397–serine 437 are disordered. The span at glycine 417–glutamine 428 shows a compositional bias: basic residues.

Belongs to the DEAD box helicase family. RhlB subfamily. As to quaternary structure, component of the RNA degradosome, which is a multiprotein complex involved in RNA processing and mRNA degradation.

The protein localises to the cytoplasm. The enzyme catalyses ATP + H2O = ADP + phosphate + H(+). Its function is as follows. DEAD-box RNA helicase involved in RNA degradation. Has RNA-dependent ATPase activity and unwinds double-stranded RNA. This Vibrio parahaemolyticus serotype O3:K6 (strain RIMD 2210633) protein is ATP-dependent RNA helicase RhlB.